Here is a 160-residue protein sequence, read N- to C-terminus: Ribosomal RNA large subunit methyltransferase H (160 aa).

S-adenosyl-L-methionine contacts are provided by residues Leu-76, Gly-108, and 127–132 (LGKMTW).

The protein belongs to the RNA methyltransferase RlmH family. In terms of assembly, homodimer.

It is found in the cytoplasm. It carries out the reaction pseudouridine(1915) in 23S rRNA + S-adenosyl-L-methionine = N(3)-methylpseudouridine(1915) in 23S rRNA + S-adenosyl-L-homocysteine + H(+). Specifically methylates the pseudouridine at position 1915 (m3Psi1915) in 23S rRNA. This is Ribosomal RNA large subunit methyltransferase H from Rhizobium leguminosarum bv. trifolii (strain WSM2304).